The sequence spans 275 residues: Hydroxyethylthiazole kinase (275 aa).

Residue Met50 coordinates substrate. The ATP site is built by Arg126 and Ser171. Ala200 contacts substrate.

This sequence belongs to the Thz kinase family. Requires Mg(2+) as cofactor.

It catalyses the reaction 5-(2-hydroxyethyl)-4-methylthiazole + ATP = 4-methyl-5-(2-phosphooxyethyl)-thiazole + ADP + H(+). The protein operates within cofactor biosynthesis; thiamine diphosphate biosynthesis; 4-methyl-5-(2-phosphoethyl)-thiazole from 5-(2-hydroxyethyl)-4-methylthiazole: step 1/1. In terms of biological role, catalyzes the phosphorylation of the hydroxyl group of 4-methyl-5-beta-hydroxyethylthiazole (THZ). The chain is Hydroxyethylthiazole kinase from Acinetobacter baumannii (strain ACICU).